We begin with the raw amino-acid sequence, 287 residues long: Co-chaperone protein DjlA (287 aa).

At 1–6 (MQIFGK) the chain is on the periplasmic side. A helical membrane pass occupies residues 7 to 30 (ILGAFFGFLFGGVFGALFGLFIGH). Over 31-287 (QFDKARRLSQ…DLIKKEKGFK (257 aa)) the chain is Cytoplasmic. The interval 192 to 213 (GGFGGQQHQSHHSSSHGGWQQA) is disordered. The 67-residue stretch at 221 to 287 (DAYKILGIDA…DLIKKEKGFK (67 aa)) folds into the J domain.

In terms of assembly, homodimer.

The protein resides in the cell inner membrane. Regulatory DnaK co-chaperone. Direct interaction between DnaK and DjlA is needed for the induction of the wcaABCDE operon, involved in the synthesis of a colanic acid polysaccharide capsule, possibly through activation of the RcsB/RcsC phosphotransfer signaling pathway. The colanic acid capsule may help the bacterium survive conditions outside the host. The sequence is that of Co-chaperone protein DjlA from Vibrio vulnificus (strain YJ016).